We begin with the raw amino-acid sequence, 606 residues long: Threonine--tRNA ligase (606 aa).

The segment at 212-503 is catalytic; the sequence is DHRKLGVEMK…LIEHTAGELP (292 aa). Cysteine 304, histidine 355, and histidine 480 together coordinate Zn(2+).

The protein belongs to the class-II aminoacyl-tRNA synthetase family. Homodimer. Zn(2+) is required as a cofactor.

It is found in the cytoplasm. It catalyses the reaction tRNA(Thr) + L-threonine + ATP = L-threonyl-tRNA(Thr) + AMP + diphosphate + H(+). In terms of biological role, catalyzes the attachment of threonine to tRNA(Thr) in a two-step reaction: L-threonine is first activated by ATP to form Thr-AMP and then transferred to the acceptor end of tRNA(Thr). Also edits incorrectly charged L-seryl-tRNA(Thr). In Campylobacter curvus (strain 525.92), this protein is Threonine--tRNA ligase.